The chain runs to 351 residues: Nuclear inhibitor of protein phosphatase 1 (351 aa).

An interaction with CDC5L, SF3B1 and MELK region spans residues 1–142; sequence MAAAANSGSS…LPSAVKGDEK (142 aa). The region spanning 49–101 is the FHA domain; that stretch reads YLFGRNPDLCDFTIDHQSCSRVHAALVYHKHLKRVFLIDLNSTHGTFLGHIRL. The segment at 143–224 is interaction with EED; it reads MGGEDDELKG…VDPSVGRFRN (82 aa). Threonine 161 carries the phosphothreonine; by CK2; in vitro modification. Serine 178 carries the phosphoserine; by PKA; in vitro modification. 2 consecutive short sequence motifs (nuclear localization signal) follow at residues 185–209 and 210–240; these read GNLDIQRPKRKRKNSRVTFSEDDEI and INPEDVDPSVGRFRNMVQTAVVPVKKKRVEG. An involved in PP-1 inhibition region spans residues 191 to 200; it reads RPKRKRKNSR. Residue serine 199 is modified to Phosphoserine. An involved in PP-1 binding region spans residues 200–203; sequence RVTF. At serine 204 the chain carries Phosphoserine. Serine 249 carries the phosphoserine modification. Tyrosine 264 is modified (phosphotyrosine). Positions 310–329 are interaction with EED; the sequence is AVNMNPAPNPAVYNPEAVNE. The disordered stretch occupies residues 316–351; sequence APNPAVYNPEAVNEPKKKKYAKEAWPGKKPTPSLLI. The segment at 330-351 is RNA-binding; that stretch reads PKKKKYAKEAWPGKKPTPSLLI. The involved in PP-1 inhibition stretch occupies residues 331–337; it reads KKKKYAK. Tyrosine 335 is subject to Phosphotyrosine.

In terms of assembly, interacts with phosphorylated CDC5L, SF3B1 and MELK. Interacts with EED. Part of a complex consisting of PPP1R8, EED, HDAC2 and PP-1. Part of the spliceosome. Interacts with PPP1CA, PPP1CB and PPP1CC. In terms of processing, the N-terminus is blocked. Post-translationally, inactivated by phosphorylation on Ser-199 or Ser-204.

The protein localises to the nucleus. The protein resides in the nucleus speckle. In terms of biological role, inhibitor subunit of the major nuclear protein phosphatase-1 (PP-1). It has RNA-binding activity but does not cleave RNA and may target PP-1 to RNA-associated substrates. May also be involved in pre-mRNA splicing. Binds DNA and might act as a transcriptional repressor. Seems to be required for cell proliferation. This Bos taurus (Bovine) protein is Nuclear inhibitor of protein phosphatase 1 (PPP1R8).